The primary structure comprises 230 residues: Flavin-dependent thymidylate synthase (230 aa).

The ThyX domain maps to 1 to 217 (MEIKVLEKGF…PVTYEAFLNF (217 aa)). FAD is bound by residues serine 55, 78–80 (RHR), and glutamate 86. DUMP-binding positions include 75–78 (QLVR), 86–90 (ERSGR), and arginine 156. Residues 78–88 (RHRIASINERS) carry the ThyX motif motif. FAD-binding positions include 172–174 (NAR) and asparagine 178. Position 183 (arginine 183) interacts with dUMP. Arginine 183 (involved in ionization of N3 of dUMP, leading to its activation) is an active-site residue.

This sequence belongs to the thymidylate synthase ThyX family. As to quaternary structure, homotetramer. FAD serves as cofactor.

It catalyses the reaction dUMP + (6R)-5,10-methylene-5,6,7,8-tetrahydrofolate + NADPH + H(+) = dTMP + (6S)-5,6,7,8-tetrahydrofolate + NADP(+). Its pathway is pyrimidine metabolism; dTTP biosynthesis. Functionally, catalyzes the reductive methylation of 2'-deoxyuridine-5'-monophosphate (dUMP) to 2'-deoxythymidine-5'-monophosphate (dTMP) while utilizing 5,10-methylenetetrahydrofolate (mTHF) as the methyl donor, and NADPH and FADH(2) as the reductant. The polypeptide is Flavin-dependent thymidylate synthase (Kosmotoga olearia (strain ATCC BAA-1733 / DSM 21960 / TBF 19.5.1)).